The following is a 151-amino-acid chain: UPF0756 membrane protein Dred_1676 (151 aa).

Transmembrane regions (helical) follow at residues 9–29 (VILLLIGLVAQSNLIAICASV), 47–67 (THGLELGLLFLLLSILVPIAT), 75–95 (LLYNVSSLPGFLSIVGGILAT), and 111–131 (IIFGLIVGSVIGIIFFNGQPV).

The protein belongs to the UPF0756 family.

It is found in the cell membrane. The protein is UPF0756 membrane protein Dred_1676 of Desulforamulus reducens (strain ATCC BAA-1160 / DSM 100696 / MI-1) (Desulfotomaculum reducens).